The chain runs to 99 residues: Acylphosphatase (99 aa).

An Acylphosphatase-like domain is found at 5 to 97; it reads IRQVMVRGRV…YAGERFSILS (93 aa). Catalysis depends on residues Arg20 and Asn38.

Belongs to the acylphosphatase family.

The catalysed reaction is an acyl phosphate + H2O = a carboxylate + phosphate + H(+). This Rhodopseudomonas palustris (strain BisB5) protein is Acylphosphatase (acyP).